Consider the following 355-residue polypeptide: Replication-associated protein (355 aa).

The region spanning 11–114 is the CRESS-DNA virus Rep endonuclease domain; sequence LHRTANTFLT…PLALFERGTF (104 aa). Residues 18–21 carry the RCR-1 motif; the sequence is FLTY. Residues Glu-52, His-60, and His-62 each contribute to the a divalent metal cation site. The RCR-2 motif lies at 60–62; the sequence is HLH. Tyr-100 functions as the For DNA cleavage activity in the catalytic mechanism. The RCR-3 signature appears at 100 to 103; that stretch reads YILK. Glu-104 serves as a coordination point for a divalent metal cation. Residues 175–187 are oligomerization; the sequence is SANKLFPDIQEEF. Residue 229–236 coordinates ATP; it reads GPTRTGKS. The interval 252-270 is transactivation; that stretch reads VDWSSYNEDAIYNIVDDIP. The Nuclear localization signal signature appears at 292-303; the sequence is KYGKKKKVQMKS.

Belongs to the geminiviridae Rep protein family. In terms of assembly, homooligomer. Rep binds to repeated DNA motifs (iterons). Forms the O-complex, which is a Rep-DNA complex involved in the initiation of RCR. Part of the C- and V-complexes which are RepA-Rep-DNA complexes involved in the c-sense and v-sense transcription. The cofactor is Mg(2+). It depends on Mn(2+) as a cofactor.

The protein localises to the host nucleus. Functionally, essential for the replication of viral ssDNA. The closed circular ssDNA genome is first converted to a superhelical dsDNA. Rep binds a specific region at the genome origin of replication. It introduces an endonucleolytic nick within the conserved sequence 5'-TAATATTAC-3' in the intergenic region of the genome present in all geminiviruses, thereby initiating the rolling circle replication (RCR). Following cleavage, binds covalently to the 5'-phosphate of DNA as a tyrosyl ester. The cleavage gives rise to a free 3'-OH that serves as a primer for the cellular DNA polymerase. The polymerase synthesizes the (+) strand DNA by rolling circle mechanism. After one round of replication, a Rep-catalyzed nucleotidyl transfer reaction releases a circular single-stranded virus genome, thereby terminating the replication. Displays origin-specific DNA cleavage, nucleotidyl transferase, ATPase and helicase activities. Acts as an inhibitor of C-sense gene transcription. The sequence is that of Replication-associated protein from Maize streak virus genotype D (isolate Raw) (MSV).